Reading from the N-terminus, the 207-residue chain is Putative tributyltin chloride resistance protein (207 aa).

Residues 37 to 122 (NLPIELALMP…YHAIAALNLG (86 aa)) are slt-type domain. E49 is an active-site residue.

This sequence belongs to the transglycosylase Slt family.

The polypeptide is Putative tributyltin chloride resistance protein (tbtA) (Alteromonas sp. (strain M-1)).